A 980-amino-acid chain; its full sequence is Probable outer membrane protein PmpH (980 aa).

The N-terminal stretch at 1 to 24 (MPFSLRSTSFCFLACLCSYSYGLA) is a signal peptide. One can recognise an Autotransporter domain in the interval 661–980 (GELVPNSLWV…FVSLGLNRIF (320 aa)).

The protein belongs to the PMP outer membrane protein family.

Its subcellular location is the secreted. The protein localises to the cell wall. It is found in the cell outer membrane. The chain is Probable outer membrane protein PmpH (pmpH) from Chlamydia muridarum (strain MoPn / Nigg).